The chain runs to 221 residues: Ribosomal RNA small subunit methyltransferase Nep1 (221 aa).

S-adenosyl-L-methionine is bound by residues Gly-174, Gly-179, and 196–201; that span reads LGEVAM.

It belongs to the class IV-like SAM-binding methyltransferase superfamily. RNA methyltransferase NEP1 family. As to quaternary structure, homodimer.

The enzyme catalyses a pseudouridine in rRNA + S-adenosyl-L-methionine = an N(1)-methylpseudouridine in rRNA + S-adenosyl-L-homocysteine + H(+). In terms of biological role, methyltransferase involved in ribosomal biogenesis. Specifically catalyzes the N1-methylation of the pseudouridine corresponding to position 914 in M.jannaschii 16S rRNA. This is Ribosomal RNA small subunit methyltransferase Nep1 from Pyrobaculum arsenaticum (strain DSM 13514 / JCM 11321 / PZ6).